A 757-amino-acid chain; its full sequence is MDVNPTLLFLKVPAQNAISTTFPYTGDPPYSHGTGTGYTMDTVNRTHQYSEKGKWTTNTETGAPQLNPIDGPLPEDNEPSGYAQTDCVLEAMAFLEESHPGIFENSCLETMEVIQQTRVDKLTQGRQTYDWTLNRNQPAATALANTIEVFRSNGLTANESGRLIDFLKDVIESMDKEEMEITTHFQRKRRVRDNMTKKMVTQRTIGKKKQRLNKRSYLIRALTLNTMTKDAERGKLKRRAIATPGMQIRGFVYFVETLARSICEKLEQSGLPVGGNEKKAKLANVVRKMMTNSQDTELSFTITGDNTKWNENQNPRMFLAMITYITRNQPEWFRNVLSIAPIMFSNKMARLGKGYMFESKSMKLRTQIPAEMLASIDLKYFNESTRKKIEKIRPLLIDGTVSLSPGMMMGMFNMLSTVLGVSILNLGQKKYTKTTYWWDGLQSSDDFALILNAPNHEGIQAGVDRFYRTCKLVGINMSKKKSYINRTGTFEFTSFFYRYGFVANFSMELPSFGVSGINESADMSIGVTVIKNNMINNDLGPATAQMALQLFIKDYRYTYRCHRGDTQIQTRRSFELKKLWEQTRSKAGLLVSDGGPNLYNIRNLHIPEVCLKWELMDEDYQGRLCNPLNPFVSHKEIESVNNAVVMPAHGPAKSMEYDAVATTHSWIPKRNRSILNTSQRGILEDEQMYQKCCNLFEKFFPSSSYRRPVGISSMVEAMVSRARIDARIDFESGRIKKEEFAEIMKICSTIEELRRQK.

Residues 50 to 82 (SEKGKWTTNTETGAPQLNPIDGPLPEDNEPSGY) form a disordered region. Residues 55 to 64 (WTTNTETGAP) show a composition bias toward polar residues. 2 short sequence motifs (nuclear localization signal) span residues 187-195 (RKRRVRDNM) and 203-216 (RTIG…NKRS). Residues 249 to 256 (RGFVYFVE) form a promoter-binding site region. A RdRp catalytic domain is found at 286 to 483 (VRKMMTNSQD…GINMSKKKSY (198 aa)).

This sequence belongs to the influenza viruses polymerase PB1 family. As to quaternary structure, influenza RNA polymerase is composed of three subunits: PB1, PB2 and PA. Interacts (via N-terminus) with PA (via C-terminus). Interacts (via C-terminus) with PB2 (via N-terminus); this interaction is essential for transcription initiation. Phosphorylated by host PRKCA.

It is found in the host nucleus. It localises to the host cytoplasm. The enzyme catalyses RNA(n) + a ribonucleoside 5'-triphosphate = RNA(n+1) + diphosphate. Functionally, RNA-dependent RNA polymerase which is responsible for replication and transcription of virus RNA segments. The transcription of viral mRNAs occurs by a unique mechanism called cap-snatching. 5' methylated caps of cellular mRNAs are cleaved after 10-13 nucleotides by PA. In turn, these short capped RNAs are used as primers by PB1 for transcription of viral mRNAs. During virus replication, PB1 initiates RNA synthesis and copy vRNA into complementary RNA (cRNA) which in turn serves as a template for the production of more vRNAs. The protein is RNA-directed RNA polymerase catalytic subunit of Influenza A virus (strain A/Japan/305/1957 H2N2).